The chain runs to 234 residues: Transcriptional regulatory protein CitB (234 aa).

A Response regulatory domain is found at 5–121; sequence TTLIVEDEPM…RLQHTLERFA (117 aa). At Asp56 the chain carries 4-aspartylphosphate. The segment at residues 181-200 is a DNA-binding region (H-T-H motif); sequence ADSLARILGSSKTTARRYLE.

In vitro CitB and the CitA kinase domain form a complex, formation of which is enhanced by ATP. In terms of processing, phosphorylated by CitA.

It is found in the cytoplasm. Member of the two-component regulatory system CitA/CitB essential for expression of citrate-specific fermentation genes. Phosphorylated CitB binds to two sites in the citS-citC intergenic region where it probably activates transcription of both genes. The chain is Transcriptional regulatory protein CitB (citB) from Klebsiella pneumoniae.